A 570-amino-acid chain; its full sequence is Urease subunit alpha (570 aa).

The region spanning G131 to F570 is the Urease domain. H136, H138, and K219 together coordinate Ni(2+). K219 carries the N6-carboxylysine modification. Residue H221 participates in substrate binding. Ni(2+)-binding residues include H248 and H274. Residue H322 is the Proton donor of the active site. D362 lines the Ni(2+) pocket.

This sequence belongs to the metallo-dependent hydrolases superfamily. Urease alpha subunit family. Heterotrimer of UreA (gamma), UreB (beta) and UreC (alpha) subunits. Three heterotrimers associate to form the active enzyme. It depends on Ni cation as a cofactor. In terms of processing, carboxylation allows a single lysine to coordinate two nickel ions.

It localises to the cytoplasm. The catalysed reaction is urea + 2 H2O + H(+) = hydrogencarbonate + 2 NH4(+). It functions in the pathway nitrogen metabolism; urea degradation; CO(2) and NH(3) from urea (urease route): step 1/1. The chain is Urease subunit alpha from Methylocella silvestris (strain DSM 15510 / CIP 108128 / LMG 27833 / NCIMB 13906 / BL2).